A 250-amino-acid chain; its full sequence is Small ribosomal subunit protein uS2 (250 aa).

This sequence belongs to the universal ribosomal protein uS2 family.

The sequence is that of Small ribosomal subunit protein uS2 from Paracidovorax citrulli (strain AAC00-1) (Acidovorax citrulli).